A 361-amino-acid chain; its full sequence is Queuine tRNA-ribosyltransferase (361 aa).

The active-site Proton acceptor is D89. Residues 89 to 93, D143, Q185, and G212 contribute to the substrate site; that span reads DSGGF. The tract at residues 243 to 249 is RNA binding; it reads GVGTPED. Catalysis depends on D262, which acts as the Nucleophile. The RNA binding; important for wobble base 34 recognition stretch occupies residues 267–271; it reads TRNAR. Positions 300, 302, 305, and 331 each coordinate Zn(2+).

It belongs to the queuine tRNA-ribosyltransferase family. In terms of assembly, homodimer. Within each dimer, one monomer is responsible for RNA recognition and catalysis, while the other monomer binds to the replacement base PreQ1. Zn(2+) is required as a cofactor.

It carries out the reaction 7-aminomethyl-7-carbaguanine + guanosine(34) in tRNA = 7-aminomethyl-7-carbaguanosine(34) in tRNA + guanine. It functions in the pathway tRNA modification; tRNA-queuosine biosynthesis. Its function is as follows. Catalyzes the base-exchange of a guanine (G) residue with the queuine precursor 7-aminomethyl-7-deazaguanine (PreQ1) at position 34 (anticodon wobble position) in tRNAs with GU(N) anticodons (tRNA-Asp, -Asn, -His and -Tyr). Catalysis occurs through a double-displacement mechanism. The nucleophile active site attacks the C1' of nucleotide 34 to detach the guanine base from the RNA, forming a covalent enzyme-RNA intermediate. The proton acceptor active site deprotonates the incoming PreQ1, allowing a nucleophilic attack on the C1' of the ribose to form the product. After dissociation, two additional enzymatic reactions on the tRNA convert PreQ1 to queuine (Q), resulting in the hypermodified nucleoside queuosine (7-(((4,5-cis-dihydroxy-2-cyclopenten-1-yl)amino)methyl)-7-deazaguanosine). The polypeptide is Queuine tRNA-ribosyltransferase (Nitrosomonas eutropha (strain DSM 101675 / C91 / Nm57)).